A 523-amino-acid chain; its full sequence is Cytochrome P450 monooxygenase ple1 (523 aa).

Residues 9–29 (ALPVLAIWAAIGLAYWIDSQK) form a helical membrane-spanning segment. A glycan (N-linked (GlcNAc...) asparagine) is linked at asparagine 141. Position 444 (cysteine 444) interacts with heme.

The protein belongs to the cytochrome P450 family. Heme serves as cofactor.

It localises to the membrane. The protein operates within secondary metabolite biosynthesis; terpenoid biosynthesis. Its function is as follows. Cytochrome P450 monooxygenase; part of the gene cluster that mediates the biosynthesis of pleuromutilin, a tricyclic diterpene showing antibacterial properties. The geranylgeranyl diphosphate (GGPP) synthase ple4 catalyzes the first step in pleuromutilin biosynthesis. GGPP is then substrate of the premutilin synthase (PS) ple3 to yield premutilin. Premutilin synthase is a bifunctional enzyme composed of the fusion of a class II diterpene cyclase (DTC) and a class I diterpene synthase (DTS), with the corresponding domains and active sites containing characteristic aspartate-rich motifs. GGPP is first converted to mutildienyl-diphosphate (MPP) at the class II DTC site. MPP is subsequently further cyclized at the class I DTS site, followed by a 1,5-hydride shift and addition of water prior to terminating deprotonation, to yield premutilin. The cytochrome P450 monooxygenases ple5 and ple6 hydroxylate premutilin at C-11 and C-3, respectively, producing 11-hydroxypremutilin and 3-hydroxypremutilin. The combination of the actions of both ple5 and ple6 leads to the production of 3,11-dihydroxypremutilin. The short chain dehydrogenase ple7 further converts 3,11-dihydroxypremutilin into mutilin. The acetyltransferase ple2 then acetylates mutilin to produce 14-O-acetylmutilin. Finally, the cytochrome P450 monooxygenase ple1 catalyzes hydroxylation on the alpha position of the acetyl side chain of 14-O-acetylmutilin to yield pleuromutilin. The polypeptide is Cytochrome P450 monooxygenase ple1 (Rhodocybe pseudopiperita (Clitopilus pseudopiperitus)).